A 1034-amino-acid chain; its full sequence is Glycine dehydrogenase (decarboxylating) B, mitochondrial (1034 aa).

Residues 1 to 63 (MERARRLAIL…LNGFGSQVRT (63 aa)) constitute a mitochondrion transit peptide. At K770 the chain carries N6-(pyridoxal phosphate)lysine.

Belongs to the GcvP family. Homodimer. The glycine cleavage system is composed of four proteins: P, T, L and H. Requires pyridoxal 5'-phosphate as cofactor.

It localises to the mitochondrion. The catalysed reaction is N(6)-[(R)-lipoyl]-L-lysyl-[glycine-cleavage complex H protein] + glycine + H(+) = N(6)-[(R)-S(8)-aminomethyldihydrolipoyl]-L-lysyl-[glycine-cleavage complex H protein] + CO2. The glycine cleavage system catalyzes the degradation of glycine. The P protein binds the alpha-amino group of glycine through its pyridoxal phosphate cofactor; CO(2) is released and the remaining methylamine moiety is then transferred to the lipoamide cofactor of the H protein. This chain is Glycine dehydrogenase (decarboxylating) B, mitochondrial (GDCSPB), found in Flaveria pringlei.